The chain runs to 649 residues: Cysteine-rich receptor-like protein kinase 2 (649 aa).

The signal sequence occupies residues 1–29 (MKKEPVHILPLYLPCLLMFLLSSLRQITG). The Extracellular segment spans residues 30 to 258 (DARARAVKVT…IPRNGRSRGS (229 aa)). 2 Gnk2-homologous domains span residues 33–134 (ARAV…NYSF) and 139–245 (KGPE…DQDF). Residues Asn-47, Asn-131, Asn-149, Asn-154, and Asn-214 are each glycosylated (N-linked (GlcNAc...) asparagine). A helical membrane pass occupies residues 259–279 (VVVIVVSVLSSVVVFMIGVAV). The Cytoplasmic portion of the chain corresponds to 280 to 649 (SVYICKRRTI…TVSQSSFYGR (370 aa)). Positions 325–608 (FDNANKLGQG…HMLKNKEEVL (284 aa)) constitute a Protein kinase domain. Residues 331 to 339 (LGQGGFGTV) and Lys-353 contribute to the ATP site. Tyr-398 carries the post-translational modification Phosphotyrosine. The active-site Proton acceptor is Asp-450. A phosphoserine mark is found at Ser-454 and Ser-483. A phosphothreonine mark is found at Thr-484 and Thr-489. At Tyr-497 the chain carries Phosphotyrosine.

It belongs to the protein kinase superfamily. Ser/Thr protein kinase family. CRK subfamily.

It localises to the membrane. The catalysed reaction is L-seryl-[protein] + ATP = O-phospho-L-seryl-[protein] + ADP + H(+). It catalyses the reaction L-threonyl-[protein] + ATP = O-phospho-L-threonyl-[protein] + ADP + H(+). This Arabidopsis thaliana (Mouse-ear cress) protein is Cysteine-rich receptor-like protein kinase 2 (CRK2).